Consider the following 73-residue polypeptide: Large ribosomal subunit protein bL31 (73 aa).

It belongs to the bacterial ribosomal protein bL31 family. Type A subfamily. In terms of assembly, part of the 50S ribosomal subunit.

In terms of biological role, binds the 23S rRNA. In Roseobacter denitrificans (strain ATCC 33942 / OCh 114) (Erythrobacter sp. (strain OCh 114)), this protein is Large ribosomal subunit protein bL31 (rpmE).